Here is an 816-residue protein sequence, read N- to C-terminus: Mitogen-activated protein kinase 7 (816 aa).

The tract at residues 1 to 26 (MAEPLKEEDGEDGSAEPPGPVKAEPA) is disordered. At A2 the chain carries N-acetylalanine. The required for cytoplasmic targeting stretch occupies residues 2–77 (AEPLKEEDGE…VVSSARRRLT (76 aa)). In terms of domain architecture, Protein kinase spans 55-347 (YEIIETIGNG…AAAALRHPFL (293 aa)). ATP-binding positions include 61 to 69 (IGNGAYGVV) and K84. Positions 78–139 (GQQVAIKKIP…FKSVYVVLDL (62 aa)) are required for binding to MAP2K5. Residues 140 to 406 (MESDLHQIIH…QQIRFQPSLQ (267 aa)) form a necessary for oligomerization region. The active-site Proton acceptor is D182. Positions 219 to 221 (TEY) match the TXY motif. The disordered stretch occupies residues 406-737 (QPVASEPGCP…PVFSGTPKGS (332 aa)). The interval 407–806 (PVASEPGCPD…REIQMDSPML (400 aa)) is may not be required for kinase activity; required to stimulate MEF2C activity. Pro residues-rich tracts occupy residues 433 to 445 (SPPPAPPPCPGPA) and 454 to 463 (QPPPPVSEPA). The span at 476-486 (KAALKAALLKS) shows a compositional bias: low complexity. 3 stretches are compositionally biased toward basic and acidic residues: residues 502-519 (PEPRKPVTAQERQREREE), 527-544 (RAKEREKRRQERERKERG), and 563-573 (DNDRSLLERWT). Residues 505–539 (RKPVTAQERQREREEKRRRRQERAKEREKRRQERE) carry the Nuclear localization signal motif. Residues 578–587 (PAAPALTSVP) show a composition bias toward low complexity. Pro residues-rich tracts occupy residues 588-610 (APAPAPTPTPTPVQPTSPPPGPV) and 628-655 (VPQPACPPPGPAPHPTGPPGPIPVPAPP). Residues 676 to 685 (PGSSTPGVLP) are compositionally biased toward low complexity. The span at 686–695 (YFPPGLPPPD) shows a compositional bias: pro residues. Over residues 701–720 (QSSMSESPDVNLVTQQLSKS) the composition is skewed to polar residues. S720 bears the Phosphoserine mark. The residue at position 733 (T733) is a Phosphothreonine.

This sequence belongs to the protein kinase superfamily. CMGC Ser/Thr protein kinase family. MAP kinase subfamily. In terms of assembly, interacts with MAP2K5. Forms oligomers. Interacts with MEF2A, MEF2C and MEF2D; the interaction phosphorylates the MEF2s and enhances transcriptional activity of MEF2A, MEF2C but not MEF2D. Interacts with SGK1. Preferentially interacts with PML isoform PML-4 but shows interaction also with its other isoforms: isoform PML-1, isoform PML-2, isoform PML-3 and isoform PML-6. Interacts (via N-terminal half) with HSP90AB1-CDC37 chaperone complex in resting cells; the interaction is MAP2K5-independent and prevents MAPK7 from ubiquitination and proteasomal degradation. Interacts with STUB1/CHIP; the interaction is enhanced in the presence of IGF1 or MAP2K5 and promotes STUB1/CHIP E3 ligase activity. It depends on Mg(2+) as a cofactor. Dually phosphorylated on Thr-219 and Tyr-221, which activates the enzyme. Autophosphorylated in vitro on threonine and tyrosine residues when the C-terminal part of the kinase, which could have a regulatory role, is absent. Expressed in many adult tissues. Abundant in heart, placenta, lung, kidney and skeletal muscle. Not detectable in liver.

The protein localises to the cytoplasm. It is found in the nucleus. The protein resides in the PML body. The enzyme catalyses L-seryl-[protein] + ATP = O-phospho-L-seryl-[protein] + ADP + H(+). It carries out the reaction L-threonyl-[protein] + ATP = O-phospho-L-threonyl-[protein] + ADP + H(+). With respect to regulation, activated by tyrosine and threonine phosphorylation. Activated in response to hyperosmolarity, hydrogen peroxide, and epidermal growth factor (EGF). Its function is as follows. Plays a role in various cellular processes such as proliferation, differentiation and cell survival. The upstream activator of MAPK7 is the MAPK kinase MAP2K5. Upon activation, it translocates to the nucleus and phosphorylates various downstream targets including MEF2C. EGF activates MAPK7 through a Ras-independent and MAP2K5-dependent pathway. As part of the MAPK/ERK signaling pathway, acts as a negative regulator of apoptosis in cardiomyocytes via interaction with STUB1/CHIP and promotion of STUB1-mediated ubiquitination and degradation of ICER-type isoforms of CREM. May have a role in muscle cell differentiation. May be important for endothelial function and maintenance of blood vessel integrity. MAP2K5 and MAPK7 interact specifically with one another and not with MEK1/ERK1 or MEK2/ERK2 pathways. Phosphorylates SGK1 at Ser-78 and this is required for growth factor-induced cell cycle progression. Involved in the regulation of p53/TP53 by disrupting the PML-MDM2 interaction. In Homo sapiens (Human), this protein is Mitogen-activated protein kinase 7 (MAPK7).